We begin with the raw amino-acid sequence, 303 residues long: Energy-coupling factor transporter ATP-binding protein EcfA2 (303 aa).

An ABC transporter domain is found at 17 to 260; that stretch reads LSVSNLSCFF…EAFLAHTTII (244 aa). 54–61 contacts ATP; the sequence is GDSGSGKS.

It belongs to the ABC transporter superfamily. Energy-coupling factor EcfA family. As to quaternary structure, forms a stable energy-coupling factor (ECF) transporter complex composed of 2 membrane-embedded substrate-binding proteins (S component), 2 ATP-binding proteins (A component) and 2 transmembrane proteins (T component).

It is found in the cell membrane. In terms of biological role, ATP-binding (A) component of a common energy-coupling factor (ECF) ABC-transporter complex. Unlike classic ABC transporters this ECF transporter provides the energy necessary to transport a number of different substrates. This is Energy-coupling factor transporter ATP-binding protein EcfA2 from Mycoplasma pneumoniae (strain ATCC 29342 / M129 / Subtype 1) (Mycoplasmoides pneumoniae).